The following is a 178-amino-acid chain: CASP-like protein 4D1 (178 aa).

Ala-2 carries the N-acetylalanine modification. Residues 2 to 14 (APPPPAPPSVTLR) lie on the Cytoplasmic side of the membrane. A helical membrane pass occupies residues 15-35 (TVLLLLRVLTAAFLLITVVLI). Topologically, residues 36–60 (STNTVTLEISSTSIKLPFNDVYAYR) are extracellular. The helical transmembrane segment at 61–81 (YMLSAAVIGLVYAVVQLFLTI) threads the bilayer. The Cytoplasmic portion of the chain corresponds to 82–97 (SQFATGKTHPLTYQFD). The chain crosses the membrane as a helical span at residues 98–118 (FYGDKVISYLLATGSAAGFGV). The Extracellular portion of the chain corresponds to 119 to 149 (SKDLKDTYIALIEFDSTDPVDKFFSKGYASA). Residues 150 to 170 (SLLLFAFVSLAVLSVFSSLAL) traverse the membrane as a helical segment. The Cytoplasmic portion of the chain corresponds to 171–178 (SKRPVPVS).

This sequence belongs to the Casparian strip membrane proteins (CASP) family. Homodimer and heterodimers. As to expression, expressed in the root epidermis.

It localises to the cell membrane. This chain is CASP-like protein 4D1, found in Arabidopsis thaliana (Mouse-ear cress).